A 539-amino-acid chain; its full sequence is Chaperonin GroEL (539 aa).

Residues 29 to 32, 86 to 90, glycine 413, 477 to 479, and aspartate 493 each bind ATP; these read TLGP, DGTTT, and NAA.

The protein belongs to the chaperonin (HSP60) family. Forms a cylinder of 14 subunits composed of two heptameric rings stacked back-to-back. Interacts with the co-chaperonin GroES.

The protein localises to the cytoplasm. It carries out the reaction ATP + H2O + a folded polypeptide = ADP + phosphate + an unfolded polypeptide.. Its function is as follows. Together with its co-chaperonin GroES, plays an essential role in assisting protein folding. The GroEL-GroES system forms a nano-cage that allows encapsulation of the non-native substrate proteins and provides a physical environment optimized to promote and accelerate protein folding. This chain is Chaperonin GroEL, found in Clavibacter michiganensis subsp. michiganensis (strain NCPPB 382).